A 571-amino-acid chain; its full sequence is Membrane protein insertase YidC (571 aa).

A helical transmembrane segment spans residues 4-24 (TRVFLIFAWLMVAVLLWMEWS). The segment at 29–78 (APTPAPTTTSAPAAAQSVPGANPGAIPSAQVPGAPGQAAAQAQASATPAS) is disordered. Composition is skewed to low complexity over residues 34 to 43 (PTTTSAPAAA) and 55 to 78 (PSAQVPGAPGQAAAQAQASATPAS). A run of 4 helical transmembrane segments spans residues 369 to 389 (LVGNWGWAIVGLVVLLKLVLY), 440 to 460 (GGCLPILIQMPIFFALYWVLV), 483 to 503 (YFILPVINVAVMWFTQKLTPA), and 518 to 538 (PLVFGVMMAFMPSGLVLYWVV).

Belongs to the OXA1/ALB3/YidC family. Type 1 subfamily. Interacts with the Sec translocase complex via SecD. Specifically interacts with transmembrane segments of nascent integral membrane proteins during membrane integration.

Its subcellular location is the cell inner membrane. Functionally, required for the insertion and/or proper folding and/or complex formation of integral membrane proteins into the membrane. Involved in integration of membrane proteins that insert both dependently and independently of the Sec translocase complex, as well as at least some lipoproteins. Aids folding of multispanning membrane proteins. In Stenotrophomonas maltophilia (strain K279a), this protein is Membrane protein insertase YidC.